A 107-amino-acid chain; its full sequence is Replication initiation control protein YabA (107 aa).

The Zn(2+) site is built by histidine 80, cysteine 82, cysteine 97, and cysteine 100.

The protein belongs to the YabA family. In terms of assembly, homotetramer. Interacts with both DnaA and DnaN, acting as a bridge between these two proteins. Zn(2+) serves as cofactor.

It is found in the cytoplasm. The protein resides in the nucleoid. Its function is as follows. Involved in control of chromosome replication initiation. Inhibits the cooperative binding of DnaA to the oriC region, thus negatively regulating initiation of chromosome replication. Inhibits the ability of DnaA-ATP to form a helix on DNA; does not disassemble preformed DnaA-DNA helices. Decreases the residence time of DnaA on the chromosome at its binding sites (oriC, replication forks and promoter-binding sites). Tethers DnaA to the replication machinery via the DNA polymerase beta sliding clamp subunit (dnaN). Associates with oriC and other DnaA targets on the chromosome in a DnaA-dependent manner. This is Replication initiation control protein YabA from Streptococcus gordonii (strain Challis / ATCC 35105 / BCRC 15272 / CH1 / DL1 / V288).